Reading from the N-terminus, the 201-residue chain is dTTP/UTP pyrophosphatase (201 aa).

Asp-81 acts as the Proton acceptor in catalysis.

The protein belongs to the Maf family. YhdE subfamily. A divalent metal cation is required as a cofactor.

Its subcellular location is the cytoplasm. It carries out the reaction dTTP + H2O = dTMP + diphosphate + H(+). The enzyme catalyses UTP + H2O = UMP + diphosphate + H(+). Functionally, nucleoside triphosphate pyrophosphatase that hydrolyzes dTTP and UTP. May have a dual role in cell division arrest and in preventing the incorporation of modified nucleotides into cellular nucleic acids. The chain is dTTP/UTP pyrophosphatase from Bordetella avium (strain 197N).